A 430-amino-acid chain; its full sequence is uncharacterized protein (430 aa).

2 helical membrane-spanning segments follow: residues 20–40 and 405–425; these read YLCL…GIMP and YIWW…LLVI.

Its subcellular location is the membrane. This is an uncharacterized protein from Schizosaccharomyces pombe (strain 972 / ATCC 24843) (Fission yeast).